A 62-amino-acid polypeptide reads, in one-letter code: MLAAFQLTVLALIATSFLMVIGVPVIFASPEGWVKSKNFVFSGALLWISLVFAVGILNSFVV.

2 consecutive transmembrane segments (helical) span residues 8–28 (TVLALIATSFLMVIGVPVIFA) and 41–61 (FSGALLWISLVFAVGILNSFV).

It belongs to the PsbZ family. In terms of assembly, PSII is composed of 1 copy each of membrane proteins PsbA, PsbB, PsbC, PsbD, PsbE, PsbF, PsbH, PsbI, PsbJ, PsbK, PsbL, PsbM, PsbT, PsbY, PsbZ, Psb30/Ycf12, at least 3 peripheral proteins of the oxygen-evolving complex and a large number of cofactors. It forms dimeric complexes.

Its subcellular location is the plastid. The protein localises to the chloroplast thylakoid membrane. Functionally, may control the interaction of photosystem II (PSII) cores with the light-harvesting antenna, regulates electron flow through the 2 photosystem reaction centers. PSII is a light-driven water plastoquinone oxidoreductase, using light energy to abstract electrons from H(2)O, generating a proton gradient subsequently used for ATP formation. The sequence is that of Photosystem II reaction center protein Z from Mesostigma viride (Green alga).